A 1249-amino-acid polypeptide reads, in one-letter code: Cilia- and flagella-associated protein 57 (1249 aa).

8 WD repeats span residues 105-148 (FQVQ…AIIK), 195-233 (GESS…WETS), 335-374 (SDKQ…ISKG), 386-425 (LHSA…LELY), 427-469 (EYQE…KEYS), 471-506 (RGCK…NINI), 509-548 (GHTG…RETE), and 635-674 (AHAG…GRGI). Coiled-coil stretches lie at residues 690–1056 (KTDM…KTDL) and 1094–1165 (SDLQ…SALK).

Belongs to the CFAP57 family. As to quaternary structure, may form homodimers. Associates with components of the nexin-dynein regulatory complex (N-DRC) and the CFAP184:CFAP263 complex. Predominanly expressed in testis, lung and skin. Weak expression in brain and kidney.

The protein localises to the cytoplasm. It localises to the cytoskeleton. The protein resides in the cilium axoneme. Functionally, associates with components of the nexin-dynein regulatory complex (N-DRC), a key regulator of ciliary/flagellar motility, and might act as an inner dynein arm (IDA) hub or linkage. This chain is Cilia- and flagella-associated protein 57, found in Mus musculus (Mouse).